The chain runs to 558 residues: Polysialic acid transport protein KpsD (558 aa).

An N-terminal signal peptide occupies residues 1-20; it reads MKLFKSILLIAACHAAQASA.

This sequence to E.coli K1 KpsD.

It localises to the periplasm. In terms of biological role, involved in the translocation of the polysialic acid capsule across the outer membrane to the cell surface. May function as the periplasmic binding element of the PSA transport system, in which it transiently interacts with the membrane component of the transporter, binds polysaccharide and transports the polymer to a component in the outer membrane. The polypeptide is Polysialic acid transport protein KpsD (kpsD) (Escherichia coli).